The following is an 888-amino-acid chain: 3-hydroxy-3-methylglutaryl-coenzyme A reductase (888 aa).

Topologically, residues 1–9 (MLSRLFRMH) are cytoplasmic. Residues 10–39 (GLFVASHPWEVIVGTVTLTICMMSMNMFTG) form a helical membrane-spanning segment. Topologically, residues 40–56 (NDKICGWNYECPKFEED) are lumenal. A helical membrane pass occupies residues 57 to 78 (VLSSDIIILTITRCIAILYIYF). The 158-residue stretch at 61 to 218 (DIIILTITRC…MTFFPACVSL (158 aa)) folds into the SSD domain. Positions 75–78 (YIYF) match the INSIG-binding motif motif. The Cytoplasmic segment spans residues 79 to 89 (QFQNLRQLGSK). A Glycyl lysine isopeptide (Lys-Gly) (interchain with G-Cter in ubiquitin) cross-link involves residue Lys-89. The chain crosses the membrane as a helical span at residues 90–114 (YILGIAGLFTIFSSFVFSTVVIHFL). Topologically, residues 115-123 (DKELTGLNE) are lumenal. A helical membrane pass occupies residues 124–149 (ALPFFLLLIDLSRASALAKFALSSNS). Residues 150–159 (QDEVRENIAR) lie on the Cytoplasmic side of the membrane. Residues 160-187 (GMAILGPTFTLDALVECLVIGVGTMSGV) traverse the membrane as a helical segment. Topologically, residues 188–191 (RQLE) are lumenal. The chain crosses the membrane as a helical span at residues 192 to 220 (IMCCFGCMSVLANYFVFMTFFPACVSLVL). The Cytoplasmic segment spans residues 221-248 (ELSRESREGRPIWQLSHFARVLEEEENK). Lys-248 participates in a covalent cross-link: Glycyl lysine isopeptide (Lys-Gly) (interchain with G-Cter in ubiquitin). The chain crosses the membrane as a helical span at residues 249-275 (PNPVTQRVKMIMSLGLVLVHAHSRWIA). The Lumenal portion of the chain corresponds to 276–314 (DPSPQNSTADNSKVSLGLDENVSKRIEPSVSLWQFYLSK). 2 N-linked (GlcNAc...) asparagine glycosylation sites follow: Asn-281 and Asn-296. A helical membrane pass occupies residues 315–339 (MISMDIEQVITLSLALLLAVKYIFF). The Cytoplasmic portion of the chain corresponds to 340–888 (EQAETESTLS…LEGACTKKAA (549 aa)). Residues Glu-559, Lys-691, and Asp-767 each act as charge relay system in the active site. The active-site Proton donor is His-866. Ser-872 is subject to Phosphoserine; by AMPK.

This sequence belongs to the HMG-CoA reductase family. In terms of assembly, homotetramer. Homodimer. Interacts (via its SSD) with INSIG1; the interaction, accelerated by sterols, leads to the recruitment of HMGCR to AMFR/gp78 for its ubiquitination by the sterol-mediated ERAD pathway. Interacts with UBIAD1. In terms of processing, undergoes sterol-mediated ubiquitination and ER-associated degradation (ERAD). Accumulation of sterols in the endoplasmic reticulum (ER) membrane, triggers binding of the reductase to the ER membrane protein INSIG1 or INSIG2. The INSIG1 binding leads to the recruitment of the ubiquitin ligase, AMFR/gp78, RNF139 or RNF145, initiating ubiquitination of the reductase. The ubiquitinated reductase is then extracted from the ER membrane and delivered to cytosolic 26S proteosomes by a mechanism probably mediated by the ATPase Valosin-containing protein VCP/p97. The INSIG2-binding leads to the recruitment of the ubiquitin ligase RNF139, initiating ubiquitination of the reductase. Lys-248 is the main site of ubiquitination. Ubiquitination is enhanced by the presence of a geranylgeranylated protein. Post-translationally, N-glycosylated. Deglycosylated by NGLY1 on release from the endoplasmic reticulum (ER) in a sterol-mediated manner. Phosphorylated. Phosphorylation at Ser-872 reduces the catalytic activity.

It is found in the endoplasmic reticulum membrane. Its subcellular location is the peroxisome membrane. The catalysed reaction is (R)-mevalonate + 2 NADP(+) + CoA = (3S)-3-hydroxy-3-methylglutaryl-CoA + 2 NADPH + 2 H(+). It participates in metabolic intermediate biosynthesis; (R)-mevalonate biosynthesis; (R)-mevalonate from acetyl-CoA: step 3/3. Its activity is regulated as follows. Regulated by a negative feedback mechanism through sterols and non-sterol metabolites derived from mevalonate. Phosphorylation at Ser-872 down-regulates the catalytic activity. In terms of biological role, catalyzes the conversion of (3S)-hydroxy-3-methylglutaryl-CoA (HMG-CoA) to mevalonic acid, the rate-limiting step in the synthesis of cholesterol and other isoprenoids, thus plays a critical role in cellular cholesterol homeostasis. This is 3-hydroxy-3-methylglutaryl-coenzyme A reductase (HMGCR) from Oryctolagus cuniculus (Rabbit).